The primary structure comprises 915 residues: DNA (cytosine-5)-methyltransferase 2 (915 aa).

Positions 1 to 14 (MAPSSPSSARPTRA) are enriched in low complexity. Residues 1 to 171 (MAPSSPSSAR…STAANKPEED (171 aa)) are disordered. The segment covering 15–30 (SGRERSAMAEEIHQNQ) has biased composition (basic and acidic residues). The span at 42 to 57 (AKRRRKAASSGKKPKP) shows a compositional bias: basic residues. Over residues 71-80 (KKGETEKTEP) the composition is skewed to basic and acidic residues. Acidic residues predominate over residues 81 to 108 (VVDDVCAEEPDEEELAMGEEEAEAEEQA). The span at 109-119 (MQEVVAAVAAG) shows a compositional bias: low complexity. A BAH domain is found at 188–313 (IVYCLGDDVY…VAYSTFANIS (126 aa)). Positions 315–328 (ENGQSGSETASGIS) are enriched in polar residues. Residues 315-338 (ENGQSGSETASGISSDDAGLETSS) are disordered. An SAM-dependent MTase C5-type domain is found at 345 to 876 (ATLLDLYSGC…YCLGQAYLGE (532 aa)). The 64-residue stretch at 445-508 (FVVQKLIGIR…EGRKRKILPL (64 aa)) folds into the Chromo domain. C521 is an active-site residue.

It belongs to the class I-like SAM-binding methyltransferase superfamily. C5-methyltransferase family.

It is found in the nucleus. It catalyses the reaction a 2'-deoxycytidine in DNA + S-adenosyl-L-methionine = a 5-methyl-2'-deoxycytidine in DNA + S-adenosyl-L-homocysteine + H(+). Its function is as follows. May be involved in the CpXpG methylation and in gene silencing. This chain is DNA (cytosine-5)-methyltransferase 2 (ZMET5), found in Zea mays (Maize).